Here is a 190-residue protein sequence, read N- to C-terminus: Probable chorismate pyruvate-lyase (190 aa).

Residues Arg77, Leu115, and Glu174 each contribute to the substrate site.

It belongs to the UbiC family.

It localises to the cytoplasm. It carries out the reaction chorismate = 4-hydroxybenzoate + pyruvate. It functions in the pathway cofactor biosynthesis; ubiquinone biosynthesis. Its function is as follows. Removes the pyruvyl group from chorismate, with concomitant aromatization of the ring, to provide 4-hydroxybenzoate (4HB) for the ubiquinone pathway. The chain is Probable chorismate pyruvate-lyase from Shewanella sp. (strain MR-4).